We begin with the raw amino-acid sequence, 321 residues long: Isopenicillin N synthase (321 aa).

The tract at residues 1-42 (MPVLMPSADVPTIDISPQLFGTDPTPRRTSRGRSTRPARGSG) is disordered. Isopenicillin N is bound by residues Arg-87, Tyr-91, and Tyr-188. Positions 87, 91, 188, 213, and 215 each coordinate N-[(5S)-5-amino-5-carboxypentanoyl]-L-cysteinyl-D-valine. Residues 179-287 (TLSAVSMIRY…RLSLPFFLHA (109 aa)) enclose the Fe2OG dioxygenase domain. Positions 213, 215, and 269 each coordinate Fe(2+). Residue Arg-278 coordinates 2-oxoglutarate. Ser-280 contacts isopenicillin N. Position 280 (Ser-280) interacts with N-[(5S)-5-amino-5-carboxypentanoyl]-L-cysteinyl-D-valine.

It belongs to the iron/ascorbate-dependent oxidoreductase family. It depends on Fe cation as a cofactor. L-ascorbate is required as a cofactor.

It carries out the reaction N-[(5S)-5-amino-5-carboxypentanoyl]-L-cysteinyl-D-valine + O2 = isopenicillin N + 2 H2O. The protein operates within antibiotic biosynthesis; penicillin G biosynthesis; penicillin G from L-alpha-aminoadipate and L-cysteine and L-valine: step 2/3. Functionally, removes, in the presence of oxygen, 4 hydrogen atoms from delta-L-(alpha-aminoadipyl)-L-cysteinyl-D-valine (ACV) to form the azetidinone and thiazolidine rings of isopenicillin. The protein is Isopenicillin N synthase (pcbC) of Streptantibioticus cattleyicolor (Streptomyces cattleya).